The chain runs to 957 residues: Glycine dehydrogenase (decarboxylating) (957 aa).

An N6-(pyridoxal phosphate)lysine modification is found at Lys-708.

This sequence belongs to the GcvP family. As to quaternary structure, the glycine cleavage system is composed of four proteins: P, T, L and H. Pyridoxal 5'-phosphate serves as cofactor.

It carries out the reaction N(6)-[(R)-lipoyl]-L-lysyl-[glycine-cleavage complex H protein] + glycine + H(+) = N(6)-[(R)-S(8)-aminomethyldihydrolipoyl]-L-lysyl-[glycine-cleavage complex H protein] + CO2. The glycine cleavage system catalyzes the degradation of glycine. The P protein binds the alpha-amino group of glycine through its pyridoxal phosphate cofactor; CO(2) is released and the remaining methylamine moiety is then transferred to the lipoamide cofactor of the H protein. The sequence is that of Glycine dehydrogenase (decarboxylating) from Escherichia coli O17:K52:H18 (strain UMN026 / ExPEC).